Here is a 106-residue protein sequence, read N- to C-terminus: UPF0060 membrane protein Bxeno_B1021 (106 aa).

Helical transmembrane passes span 2-22 (KTFL…YLPW), 30-50 (SIWL…LLTL), 58-78 (VYAA…WCVD), and 82-102 (PTLW…IIAF).

It belongs to the UPF0060 family.

The protein localises to the cell inner membrane. The sequence is that of UPF0060 membrane protein Bxeno_B1021 from Paraburkholderia xenovorans (strain LB400).